The primary structure comprises 560 residues: Dimethylaniline monooxygenase [N-oxide-forming] 4 (560 aa).

Residues 9-13 (GAGVS), Glu-32, and 40-41 (LW) contribute to the FAD site. NADP(+)-binding positions include 60–61 (TN) and 195–198 (TGGD). Residues 519 to 539 (APVLIVSLLLIYKSSLFLELV) form a helical membrane-spanning segment.

The protein belongs to the FMO family. FAD is required as a cofactor. In terms of tissue distribution, detected in liver and kidney (at protein level).

It localises to the microsome membrane. It is found in the endoplasmic reticulum membrane. The enzyme catalyses N,N-dimethylaniline + NADPH + O2 + H(+) = N,N-dimethylaniline N-oxide + NADP(+) + H2O. Functionally, this protein is involved in the oxidative metabolism of a variety of xenobiotics such as drugs and pesticides. In Rattus norvegicus (Rat), this protein is Dimethylaniline monooxygenase [N-oxide-forming] 4 (Fmo4).